The following is a 477-amino-acid chain: Xylose isomerase (477 aa).

His-142 is an active-site residue. Mn(2+) contacts are provided by Glu-273, Glu-309, His-312, Asp-337, Asp-348, Asp-350, and Asp-380.

Belongs to the xylose isomerase family. It depends on Mn(2+) as a cofactor.

The catalysed reaction is alpha-D-xylose = alpha-D-xylulofuranose. The chain is Xylose isomerase (XYLA) from Arabidopsis thaliana (Mouse-ear cress).